The chain runs to 71 residues: Alpha-elapitoxin-Nn3a (71 aa).

5 cysteine pairs are disulfide-bonded: cysteine 3-cysteine 20, cysteine 14-cysteine 42, cysteine 26-cysteine 30, cysteine 46-cysteine 56, and cysteine 57-cysteine 62.

This sequence belongs to the three-finger toxin family. Long-chain subfamily. Type II alpha-neurotoxin sub-subfamily. In terms of tissue distribution, expressed by the venom gland.

The protein resides in the secreted. Nicotinic acetylcholine receptor antagonist. Binds to muscle nicotinic acetylcholine receptor (nAChR) and inhibits acetylcholine from binding to the receptor, thereby impairing neuromuscular transmission. Produces peripheral paralysis by blocking neuromuscular transmission at the postsynaptic site. Induces concentration-dependent inhibition of indirect twitches and abolishes contractile responses of tissues to exogenous acetylcholine and carbachol, in the chick biventer cervicis nerve-muscle preparation at 100-300 nM (in vitro). Prior incubation of tissues with Indian polyvalent antivenom (1 ml/0.6 mg) prevents the neurotoxic effects at 100 nM (in vitro). Addition of Indian polyvalent antivenom (1 ml/0.6 mg) at the t90 time point partially restores the neurotoxic effects (in vitro). Displays a reversible antagonism of concentration-response curves to carbachol, with a pA2 of 8.17 (in vitro). This is Alpha-elapitoxin-Nn3a from Naja naja (Indian cobra).